We begin with the raw amino-acid sequence, 390 residues long: MLPLSIKDDEYKPPKFNLVRKVSGWIRSIFSDSTSRNLFCFLCLNLSFAFVELFYGIWSNSLGLISDSFHMFFDCTALLAGLAASVISRWKTNETFSYGYVRAEVLAGFVNGLFLIFTAFFIFSEGIERALDTPEVHHERLLPVSIMGFLVNLIGIFVFQHGGGHGHSHESGHGHSHSLFNGAVSHGHSHSHGGGHGHSHGGGHEHGHSHGGGHEHGHDHSHKHGHGYGSSCHDEPPEENKGSSKQILEGVFLHIVADALGSVGVIISTILMQQYGLMIADPICSMLIALLIFVSVIPLLKQSIGILMQRTPPSLDHVLPQCYQRVQQLQGVYHLQEPHFWTLCTDVYIGTLKLVIGPEADARWILSQTHNIFTQAGVRQLYVQIDLAAM.

Over 1 to 37 (MLPLSIKDDEYKPPKFNLVRKVSGWIRSIFSDSTSRN) the chain is Cytoplasmic. The chain crosses the membrane as a helical span at residues 38 to 58 (LFCFLCLNLSFAFVELFYGIW). Residues 59–67 (SNSLGLISD) lie on the Lumenal side of the membrane. The chain crosses the membrane as a helical span at residues 68 to 88 (SFHMFFDCTALLAGLAASVIS). Over 89–102 (RWKTNETFSYGYVR) the chain is Cytoplasmic. A helical membrane pass occupies residues 103–123 (AEVLAGFVNGLFLIFTAFFIF). The Lumenal segment spans residues 124 to 140 (SEGIERALDTPEVHHER). The chain crosses the membrane as a helical span at residues 141-161 (LLPVSIMGFLVNLIGIFVFQH). Positions 161-226 (HGGGHGHSHE…GHDHSHKHGH (66 aa)) are his-rich loop. Over 162–250 (GGGHGHSHES…KGSSKQILEG (89 aa)) the chain is Cytoplasmic. A disordered region spans residues 166-243 (GHSHESGHGH…DEPPEENKGS (78 aa)). Basic residues predominate over residues 187 to 201 (GHSHSHGGGHGHSHG). Basic and acidic residues-rich tracts occupy residues 202 to 218 (GGHE…EHGH) and 232 to 242 (CHDEPPEENKG). Residues 251–271 (VFLHIVADALGSVGVIISTIL) form a helical membrane-spanning segment. The Lumenal segment spans residues 272–276 (MQQYG). A helical membrane pass occupies residues 277–297 (LMIADPICSMLIALLIFVSVI). Over 298-390 (PLLKQSIGIL…LYVQIDLAAM (93 aa)) the chain is Cytoplasmic.

This sequence belongs to the cation diffusion facilitator (CDF) transporter (TC 2.A.4) family. SLC30A subfamily. In terms of assembly, homooligomer.

It localises to the golgi apparatus membrane. It is found in the cytoplasmic vesicle. The protein resides in the golgi apparatus. Its subcellular location is the trans-Golgi network. The protein localises to the sarcoplasmic reticulum. It localises to the mitochondrion. It carries out the reaction Zn(2+)(in) = Zn(2+)(out). Its function is as follows. Zinc ion transporter mediating zinc entry from the cytosol into the lumen of organelles along the secretory pathway. By contributing to zinc ion homeostasis within the early secretory pathway, regulates the activation and folding of enzymes like alkaline phosphatases. This Xenopus laevis (African clawed frog) protein is Zinc transporter 7-B (slc30a7-b).